The primary structure comprises 135 residues: uncharacterized protein (135 aa).

This is an uncharacterized protein from Acanthamoeba polyphaga (Amoeba).